Consider the following 607-residue polypeptide: MEAPAARLFLLLLLGTWAPAPGSASSEAPPLINEDVKRTVDLSSHLAKVTAEVVLAHLGGGSTSRATSFLLALEPELEARLAHLGVQVKGEDEEENNLEVRETKIKGKSGRFFTVRLPVALDPGAKISVIVETVYTHVLQPYPTQITQSEKQFVVFEGNHYFYSPYPTKTQTMRVKLASRNVESYTKLGNPTRSEDLLDYGPFRDVPAYSQDTFKVHYENNSPFLTITSMTRVIEVSHWGNIAVEENVDLKHTGAVLKGPFSRYDYQRQPDSGISSIRSFKTILPAAAQDVYYRDEIGNVSTSHLLILDDSVEMEIRPRFPLFGGWKTHYIVGYNLPSYEYLYNLGDQYALKMRFVDHVFDEQVIDSLTVKIILPEGAKNIEIDSPYEISRAPDELHYTYLDTFGRPVIVAYKKNLVEQHIQDIVVHYTFNKVLMLQEPLLVVAAFYILFFTVIIYVRLDFSITKDPAAEARMKVACITEQVLTLVNKRIGLYRHFDETVNRYKQSRDISTLNSGKKSLETEHKALTSEIALLQSRLKTEGSDLCDRVSEMQKLDAQVKELVLKSAVEAERLVAGKLKKDTYIENEKLISGKRQELVTKIDHILDAL.

A signal peptide spans 1–23 (MEAPAARLFLLLLLGTWAPAPGS). At 24-434 (ASSEAPPLIN…VVHYTFNKVL (411 aa)) the chain is on the lumenal side. K187 bears the N6-acetyllysine mark. A glycan (N-linked (GlcNAc...) asparagine) is linked at N299. Residues 435 to 455 (MLQEPLLVVAAFYILFFTVII) traverse the membrane as a helical segment. Residues 456-607 (YVRLDFSITK…TKIDHILDAL (152 aa)) are Cytoplasmic-facing. Position 538 is an N6-acetyllysine; alternate (K538). K538 participates in a covalent cross-link: Glycyl lysine isopeptide (Lys-Gly) (interchain with G-Cter in SUMO2); alternate.

The protein belongs to the OST1 family. Component of the oligosaccharyltransferase (OST) complex. OST exists in two different complex forms which contain common core subunits RPN1, RPN2, OST48, OST4, DAD1 and TMEM258, either STT3A or STT3B as catalytic subunits, and form-specific accessory subunits. STT3A complex assembly occurs through the formation of 3 subcomplexes. Subcomplex 1 contains RPN1 and TMEM258, subcomplex 2 contains the STT3A-specific subunits STT3A, DC2/OSTC, and KCP2 as well as the core subunit OST4, and subcomplex 3 contains RPN2, DAD1, and OST48. The STT3A complex can form stable complexes with the Sec61 complex or with both the Sec61 and TRAP complexes. Interacts with TMEM35A/NACHO. In terms of processing, ubiquitinated by the ECS(ASB11) complex. Ufmylated by UFL1 in response to endoplasmic reticulum stress, promoting reticulophagy of endoplasmic reticulum sheets.

The protein localises to the endoplasmic reticulum membrane. The protein operates within protein modification; protein glycosylation. Its function is as follows. Subunit of the oligosaccharyl transferase (OST) complex that catalyzes the initial transfer of a defined glycan (Glc(3)Man(9)GlcNAc(2) in eukaryotes) from the lipid carrier dolichol-pyrophosphate to an asparagine residue within an Asn-X-Ser/Thr consensus motif in nascent polypeptide chains, the first step in protein N-glycosylation. N-glycosylation occurs cotranslationally and the complex associates with the Sec61 complex at the channel-forming translocon complex that mediates protein translocation across the endoplasmic reticulum (ER). All subunits are required for a maximal enzyme activity. In Pongo abelii (Sumatran orangutan), this protein is Dolichyl-diphosphooligosaccharide--protein glycosyltransferase subunit 1.